The following is a 610-amino-acid chain: Pyruvate decarboxylase 1 (610 aa).

The substrate site is built by aspartate 72 and histidine 159. The tract at residues aspartate 437–isoleucine 519 is thiamine pyrophosphate binding. Positions 487, 514, and 516 each coordinate Mg(2+). Substrate is bound at residue glutamate 520.

The protein belongs to the TPP enzyme family. In terms of assembly, homotetramer. The cofactor is a metal cation. Thiamine diphosphate is required as a cofactor.

It catalyses the reaction a 2-oxocarboxylate + H(+) = an aldehyde + CO2. This is Pyruvate decarboxylase 1 (PDC1) from Zea mays (Maize).